Consider the following 222-residue polypeptide: Ribosomal RNA large subunit methyltransferase E (222 aa).

Positions 1 to 13 (MSRSDKNPHERLK) are enriched in basic and acidic residues. The tract at residues 1–22 (MSRSDKNPHERLKTAKKRTASS) is disordered. Residues Gly75, Trp77, Asp94, Asp110, and Asp134 each contribute to the S-adenosyl-L-methionine site. The active-site Proton acceptor is Lys174.

This sequence belongs to the class I-like SAM-binding methyltransferase superfamily. RNA methyltransferase RlmE family.

The protein localises to the cytoplasm. The enzyme catalyses uridine(2552) in 23S rRNA + S-adenosyl-L-methionine = 2'-O-methyluridine(2552) in 23S rRNA + S-adenosyl-L-homocysteine + H(+). Its function is as follows. Specifically methylates the uridine in position 2552 of 23S rRNA at the 2'-O position of the ribose in the fully assembled 50S ribosomal subunit. In Novosphingobium aromaticivorans (strain ATCC 700278 / DSM 12444 / CCUG 56034 / CIP 105152 / NBRC 16084 / F199), this protein is Ribosomal RNA large subunit methyltransferase E.